We begin with the raw amino-acid sequence, 292 residues long: Elongation factor Ts (292 aa).

The involved in Mg(2+) ion dislocation from EF-Tu stretch occupies residues 79–82 (TDFV).

This sequence belongs to the EF-Ts family.

It is found in the cytoplasm. Associates with the EF-Tu.GDP complex and induces the exchange of GDP to GTP. It remains bound to the aminoacyl-tRNA.EF-Tu.GTP complex up to the GTP hydrolysis stage on the ribosome. The protein is Elongation factor Ts of Xanthomonas campestris pv. campestris (strain B100).